We begin with the raw amino-acid sequence, 247 residues long: Ribosomal RNA large subunit methyltransferase E (247 aa).

S-adenosyl-L-methionine-binding residues include Gly-99, Trp-101, Asp-123, Asp-139, and Asp-162. The Proton acceptor role is filled by Lys-202.

The protein belongs to the class I-like SAM-binding methyltransferase superfamily. RNA methyltransferase RlmE family.

Its subcellular location is the cytoplasm. The catalysed reaction is uridine(2552) in 23S rRNA + S-adenosyl-L-methionine = 2'-O-methyluridine(2552) in 23S rRNA + S-adenosyl-L-homocysteine + H(+). Its function is as follows. Specifically methylates the uridine in position 2552 of 23S rRNA at the 2'-O position of the ribose in the fully assembled 50S ribosomal subunit. This Anaplasma phagocytophilum (strain HZ) protein is Ribosomal RNA large subunit methyltransferase E.